The following is a 371-amino-acid chain: 3-methyl-D-ornithine--L-lysine ligase (371 aa).

Lysine 18 provides a ligand contact to ATP. Leucine 19–glutamine 20 lines the L-lysine pocket. ATP-binding positions include aspartate 39, asparagine 57–isoleucine 58, and glutamate 80–asparagine 81. An L-lysine-binding site is contributed by glutamate 80. One can recognise an ATP-grasp domain in the interval glutamate 93 to asparagine 277. ADP contacts are provided by residues lysine 112, lysine 139, serine 146, and glutamate 168–valine 171. D-ornithine-binding positions include serine 177–glutamate 179 and aspartate 233. Mg(2+) contacts are provided by glutamate 235, glutamate 247, and aspartate 249. Glutamate 247 is an ADP binding site. D-ornithine is bound by residues arginine 251–threonine 256 and glutamate 310. L-lysine contacts are provided by serine 254 and glutamate 310.

Belongs to the PylC family. The cofactor is Mg(2+).

It carries out the reaction (3R)-3-methyl-D-ornithine + L-lysine + ATP = (3R)-3-methyl-D-ornithyl-N(6)-L-lysine + ADP + phosphate + H(+). The protein operates within amino-acid biosynthesis; L-pyrrolysine biosynthesis. Its function is as follows. Is required for the biosynthesis of pyrrolysine. Catalyzes the ATP-dependent ligation between (3R)-3-methyl-D-ornithine and L-lysine, leading to (3R)-3-methyl-D-ornithyl-N6-L-lysine. Is also involved in the synthesis of pyrroline-carboxy-lysine (Pcl), a demethylated form of pyrrolysine that is generated by the pyrrolysine biosynthetic enzymes when the growth media is supplemented with D-ornithine. This chain is 3-methyl-D-ornithine--L-lysine ligase, found in Methanosarcina mazei (strain ATCC BAA-159 / DSM 3647 / Goe1 / Go1 / JCM 11833 / OCM 88) (Methanosarcina frisia).